The following is a 225-amino-acid chain: Sirohydrochlorin ferrochelatase, chloroplastic (225 aa).

The N-terminal 46 residues, 1–46, are a transit peptide targeting the chloroplast; the sequence is MTTQSQFLVNLSYGGLASQSNLRANNRVSPSSCQITRTNRSWALPV. Fe cation contacts are provided by H89 and H155. 4 residues coordinate [4Fe-4S] cluster: C199, C210, C213, and C219.

It belongs to the CbiX family. SirB subfamily. In terms of assembly, homodimer. It depends on [4Fe-4S] cluster as a cofactor.

The protein localises to the plastid. It localises to the chloroplast. The catalysed reaction is siroheme + 2 H(+) = sirohydrochlorin + Fe(2+). The protein operates within porphyrin-containing compound metabolism; siroheme biosynthesis; siroheme from sirohydrochlorin: step 1/1. Its function is as follows. Chelates iron to the siroheme precursor. Catalyzes the last step of the siroheme biosynthesis. Unlike its counterparts in bacteria, contains an [Fe-S] cluster which is not involved directly in the enzymatic reaction, but may play regulatory role in iron, sulfur and tetrapyrrole metabolism. The [Fe-S] cluster is required for normal plant growth. This chain is Sirohydrochlorin ferrochelatase, chloroplastic, found in Arabidopsis thaliana (Mouse-ear cress).